We begin with the raw amino-acid sequence, 146 residues long: Large ribosomal subunit protein bL19 (146 aa).

Belongs to the bacterial ribosomal protein bL19 family.

Functionally, this protein is located at the 30S-50S ribosomal subunit interface and may play a role in the structure and function of the aminoacyl-tRNA binding site. In Bartonella quintana (strain Toulouse) (Rochalimaea quintana), this protein is Large ribosomal subunit protein bL19.